The following is a 350-amino-acid chain: Lipase chaperone (350 aa).

Residues 12 to 32 form a helical membrane-spanning segment; the sequence is IVLYLILGCVVVCGVWYSFDV.

Belongs to the lipase chaperone family.

It localises to the cell inner membrane. Its function is as follows. May be involved in the folding of the extracellular lipase during its passage through the periplasm. In Xylella fastidiosa (strain 9a5c), this protein is Lipase chaperone (lifO).